The sequence spans 540 residues: Chaperonin GroEL (540 aa).

Residues T29–P32, D86–T90, G413, N476–A478, and D492 contribute to the ATP site.

Belongs to the chaperonin (HSP60) family. As to quaternary structure, forms a cylinder of 14 subunits composed of two heptameric rings stacked back-to-back. Interacts with the co-chaperonin GroES.

It localises to the cytoplasm. It catalyses the reaction ATP + H2O + a folded polypeptide = ADP + phosphate + an unfolded polypeptide.. Its function is as follows. Together with its co-chaperonin GroES, plays an essential role in assisting protein folding. The GroEL-GroES system forms a nano-cage that allows encapsulation of the non-native substrate proteins and provides a physical environment optimized to promote and accelerate protein folding. The protein is Chaperonin GroEL of Streptococcus agalactiae.